The following is a 231-amino-acid chain: Probable glutathione S-transferase GSTU1 (231 aa).

The GST N-terminal domain maps to 5 to 84 (KELVLLDFWV…YLDDAFPGTP (80 aa)). Residues Ser-15, Lys-42, Ile-56, and 68–69 (ES) each bind glutathione. A GST C-terminal domain is found at 97-220 (AAYARATARF…LPSPEKVYDF (124 aa)).

It belongs to the GST superfamily. Tau family.

The catalysed reaction is RX + glutathione = an S-substituted glutathione + a halide anion + H(+). In terms of biological role, conjugation of reduced glutathione to a wide number of exogenous and endogenous hydrophobic electrophiles. This chain is Probable glutathione S-transferase GSTU1 (GSTU1), found in Oryza sativa subsp. indica (Rice).